We begin with the raw amino-acid sequence, 462 residues long: Asparagine--tRNA ligase (462 aa).

Belongs to the class-II aminoacyl-tRNA synthetase family. Homodimer.

It localises to the cytoplasm. It carries out the reaction tRNA(Asn) + L-asparagine + ATP = L-asparaginyl-tRNA(Asn) + AMP + diphosphate + H(+). The polypeptide is Asparagine--tRNA ligase (Borreliella burgdorferi (strain ATCC 35210 / DSM 4680 / CIP 102532 / B31) (Borrelia burgdorferi)).